The chain runs to 59 residues: Large ribosomal subunit protein bL32 (59 aa).

The protein belongs to the bacterial ribosomal protein bL32 family.

This is Large ribosomal subunit protein bL32 from Synechococcus sp. (strain JA-2-3B'a(2-13)) (Cyanobacteria bacterium Yellowstone B-Prime).